Consider the following 599-residue polypeptide: UvrABC system protein C (599 aa).

Residues 15-93 (DNPGVYQYYD…IKTLQPRYNI (79 aa)) enclose the GIY-YIG domain. In terms of domain architecture, UVR spans 207 to 242 (KDSMKDFKKVMTNLAQNMHFEEAQKIKEKIEILENY).

It belongs to the UvrC family. As to quaternary structure, interacts with UvrB in an incision complex.

The protein localises to the cytoplasm. In terms of biological role, the UvrABC repair system catalyzes the recognition and processing of DNA lesions. UvrC both incises the 5' and 3' sides of the lesion. The N-terminal half is responsible for the 3' incision and the C-terminal half is responsible for the 5' incision. This is UvrABC system protein C from Flavobacterium psychrophilum (strain ATCC 49511 / DSM 21280 / CIP 103535 / JIP02/86).